We begin with the raw amino-acid sequence, 95 residues long: Signal recognition particle 19 kDa protein (95 aa).

It belongs to the SRP19 family. As to quaternary structure, part of the signal recognition particle protein translocation system, which is composed of SRP and FtsY. Archaeal SRP consists of a 7S RNA molecule of 300 nucleotides and two protein subunits: SRP54 and SRP19.

The protein localises to the cytoplasm. In terms of biological role, involved in targeting and insertion of nascent membrane proteins into the cytoplasmic membrane. Binds directly to 7S RNA and mediates binding of the 54 kDa subunit of the SRP. In Pyrobaculum islandicum (strain DSM 4184 / JCM 9189 / GEO3), this protein is Signal recognition particle 19 kDa protein.